The chain runs to 87 residues: Sec-independent protein translocase protein TatA (87 aa).

Residues 3–23 (GTFSWTHLLIIALLFVVLFGA) traverse the membrane as a helical segment. The disordered stretch occupies residues 47–87 (MQHETPQANAAPVQQPAQQLPPAQPAQAPAQPVNQAEQKSA). Residues 52-87 (PQANAAPVQQPAQQLPPAQPAQAPAQPVNQAEQKSA) show a composition bias toward low complexity.

This sequence belongs to the TatA/E family. In terms of assembly, the Tat system comprises two distinct complexes: a TatABC complex, containing multiple copies of TatA, TatB and TatC subunits, and a separate TatA complex, containing only TatA subunits. Substrates initially bind to the TatABC complex, which probably triggers association of the separate TatA complex to form the active translocon.

The protein resides in the cell membrane. Functionally, part of the twin-arginine translocation (Tat) system that transports large folded proteins containing a characteristic twin-arginine motif in their signal peptide across membranes. TatA could form the protein-conducting channel of the Tat system. In Nocardia farcinica (strain IFM 10152), this protein is Sec-independent protein translocase protein TatA.